A 335-amino-acid chain; its full sequence is NAC domain-containing protein 87 (335 aa).

An NAC domain is found at leucine 21 to lysine 172. Residues valine 119–threonine 178 mediate DNA binding.

It is found in the nucleus. Functionally, binds to the promoter regions of genes involved in chlorophyll catabolic processes, such as NYC1, SGR1, SGR2 and PAO. This chain is NAC domain-containing protein 87, found in Arabidopsis thaliana (Mouse-ear cress).